Consider the following 223-residue polypeptide: UPF0173 metal-dependent hydrolase TV0864 (223 aa).

It belongs to the UPF0173 family.

This chain is UPF0173 metal-dependent hydrolase TV0864, found in Thermoplasma volcanium (strain ATCC 51530 / DSM 4299 / JCM 9571 / NBRC 15438 / GSS1).